The sequence spans 505 residues: Sodium-coupled neutral amino acid transporter 3 (505 aa).

The segment at 27–48 (VPTTDTQRTEDTQHCGEGKGFL) is disordered. The span at 33-43 (QRTEDTQHCGE) shows a compositional bias: basic and acidic residues. N-linked (GlcNAc...) asparagine glycosylation is present at N73. Helical transmembrane passes span 82 to 102 (GILG…LFLL), 105 to 125 (VALL…IVGI), 143 to 163 (AAAL…LYII), 186 to 206 (MDGN…LALM), and 212 to 232 (LGYS…AVIY). An intrachain disulfide couples C239 to C276. N-linked (GlcNAc...) asparagine glycans are attached at residues N247 and N251. A helical membrane pass occupies residues 288-308 (AYTIPIMAFAFVCHPEVLPIY). The N-linked (GlcNAc...) asparagine glycan is linked to N324. 5 helical membrane-spanning segments follow: residues 325 to 345 (LSIA…YLTF), 367 to 387 (ILCV…IVLF), 409 to 429 (VLIA…APNI), 432 to 452 (IFGI…PAIF), and 472 to 492 (ALCF…FIII).

Belongs to the amino acid/polyamine transporter 2 family. As to expression, expressed predominantly in liver, moderately expressed in kidney and brain, and barely detectable in heart and muscle. Within liver, expressed in hepatocytes. Not detected in testis. Expressed in cells of the ganglion cell layer, in soma of some cells of the inner nuclear layer (at protein level). Expressed in the inner segments of photoreceptor cells.

Its subcellular location is the cell membrane. The protein localises to the basolateral cell membrane. The enzyme catalyses L-histidine(out) + Na(+)(out) + H(+)(in) = L-histidine(in) + Na(+)(in) + H(+)(out). The catalysed reaction is L-glutamine(out) + Na(+)(out) + H(+)(in) = L-glutamine(in) + Na(+)(in) + H(+)(out). It catalyses the reaction L-asparagine(out) + Na(+)(out) + H(+)(in) = L-asparagine(in) + Na(+)(in) + H(+)(out). In terms of biological role, symporter that cotransports specific neutral amino acids and sodium ions, coupled to an H(+) antiporter activity. Mainly participates in the glutamate-GABA-glutamine cycle in brain where it transports L-glutamine from astrocytes in the intercellular space for the replenishment of both neurotransmitters glutamate and gamma-aminobutyric acid (GABA) in neurons and also functions as the major influx transporter in ganglion cells mediating the uptake of glutamine. The transport activity is specific for L-glutamine, L-histidine and L-asparagine. The transport is electroneutral coupled to the cotransport of 1 Na(+) and the antiport of 1 H(+). The transport is pH dependent, saturable, Li(+) tolerant and functions in both direction depending on the concentration gradients of its substrates and cotransported ions. Also mediates an amino acid-gated H(+) conductance that is not stoichiometrically coupled to the amino acid transport but which influences the ionic gradients that drive the amino acid transport. In addition, may play a role in nitrogen metabolism, amino acid homeostasis, glucose metabolism and renal ammoniagenesis. The sequence is that of Sodium-coupled neutral amino acid transporter 3 from Mus musculus (Mouse).